The chain runs to 180 residues: Endothelin-2 (180 aa).

Positions 1–26 (MVALPTAWCSVALALLVALHEGKSQS) are cleaved as a signal peptide. A propeptide spanning residues 27–47 (AATSEEPPAPSARARGSHLRL) is cleaved from the precursor. 2 disulfides stabilise this stretch: C50/C64 and C52/C60. The propeptide occupies 71 to 180 (VNTPGQTAPY…ESSHSRWRKR (110 aa)). Positions 97 to 112 (CECYSTRDSACVTFCH) are endothelin-like. The interval 157-180 (NFTRHQQQKATREPESSHSRWRKR) is disordered.

This sequence belongs to the endothelin/sarafotoxin family.

It localises to the secreted. Its function is as follows. Endothelins are endothelium-derived vasoconstrictor peptides. The protein is Endothelin-2 (EDN2) of Atelerix albiventris (Middle-African hedgehog).